A 1322-amino-acid chain; its full sequence is MNDGENYWNAFRSHKRSATDGPTLSPWMVTVLQATKLLLFALCNIVLTLGSVFSKLIVLIMATNIVPRAHLIGKFARKCTKAAVRRTSTTTAGIYLSLLLIQCFPDTINLIRSGIDMWKGQCGQLVKSVVVLESLRAIGLAVLSFHVFPQLDLARCLVLSACFPLVAVLQRSLVAMVSAARTGRSFRNRLGRCFVAIPHVIMFLVLMSSCYVWALFDNKFTAIIALPIGVICTSAGFWESWIDTTHSGTSFDELYRLKYAVRKMNTTTKLIVSLMRIVCTVSVLVSAVYINDHKKLNSSHFVKAFFSFSTRQPHTRLLLLATGIIVLHFVMRGISRFLAALDLHPFSFVHPLSIAPLIAYGYVRYACQSPTCSIARRLARFGLHWVCDQWFQSARGIASPDFYICLIWLLVGCYRGWRLVRQRYFDTNEEIISSMPPVCNGLCIEQSLVVFQHSLNRQEKTMLTEEEDISDENDELRIRNDEVDRVSTVYGCATMWHETETEMRQVLRSILKLDVDHATRMNNKKANELRYRLEGHIFFDDAWEDVEEDGIEKRQPNEYFNMFFDLLNEMTGERLNEEGKMETRILVNTPYGGRLVVKLPSGTLLFVHLKDKKMIRHKKRWSQVMYMYYLLGHRIMDCPLSIEDRQQMADNTFILAIDGDSKFEPDALLRLLHLMNAKSDIGCACGRIHPIGNGIMVWYQKFEYAIAHWFQKAAEHVFGCVLCAPGCFSLFRASALMDDNIMHKYTKTASEPRHYVQYDQGEDRWLSTLLLKQGYRIEYAAASDAETYAPEGFEEFFNQRRRWTPSSIANTVDLLMDYKRASENNDAISYAYIAYQFLVIFFSMLGPAIIFTMLVFAQVAAFELRGSDVMLYNGIPIGFFIVLCFTTESNIQLIYAKYMSIAYAFVMLAVLVATSSQIVLETVLAPTSLFIVTMVGIFFFAACLHPKEFTNIIHGVVFFLMIPSTYVFLTLYSLINLNVITWGTREAVAKATGQKTKKAPMEQFIDRVIDIVKKGFRLISCREKKEHEERREKMEKKMQRMELALRSIESGADVKKILDATEEKEKREEETQTADFPIEENVEKTQKEIQKANRYVWMTSHSLKVCERGKLKSAEKVFWNELINAYLKPIKTTPAEMKAVAEGLASLRNQIAFTILLVNSLLALAIFLIQKHKNVLSIKFSPIKNFRWTKMNEMTGQYEETDEPLKIDPLGMGIVVFLLIILFVQTLGMLLHRLNTMIGAFQEVKNLYEYGVSPVINTKNDDERIMNNARLMINSLGVSTGHAADGYTRHRGEESDTGNVLYKLQKARLAKRMQRSALSTTE.

The Extracellular segment spans residues 1-39 (MNDGENYWNAFRSHKRSATDGPTLSPWMVTVLQATKLLL). A helical membrane pass occupies residues 40 to 60 (FALCNIVLTLGSVFSKLIVLI). Residues 61-128 (MATNIVPRAH…KGQCGQLVKS (68 aa)) are Cytoplasmic-facing. A helical membrane pass occupies residues 129–149 (VVVLESLRAIGLAVLSFHVFP). Over 150–156 (QLDLARC) the chain is Extracellular. Residues 157 to 177 (LVLSACFPLVAVLQRSLVAMV) traverse the membrane as a helical segment. Residues 178–193 (SAARTGRSFRNRLGRC) lie on the Cytoplasmic side of the membrane. Residues 194–214 (FVAIPHVIMFLVLMSSCYVWA) traverse the membrane as a helical segment. The Extracellular portion of the chain corresponds to 215–221 (LFDNKFT). Residues 222-242 (AIIALPIGVICTSAGFWESWI) form a helical membrane-spanning segment. Residues 243 to 269 (DTTHSGTSFDELYRLKYAVRKMNTTTK) lie on the Cytoplasmic side of the membrane. The helical transmembrane segment at 270-290 (LIVSLMRIVCTVSVLVSAVYI) threads the bilayer. Residues 291-316 (NDHKKLNSSHFVKAFFSFSTRQPHTR) are Extracellular-facing. The N-linked (GlcNAc...) asparagine glycan is linked to Asn-297. A helical transmembrane segment spans residues 317–337 (LLLLATGIIVLHFVMRGISRF). Topologically, residues 338 to 342 (LAALD) are cytoplasmic. The chain crosses the membrane as a helical span at residues 343 to 363 (LHPFSFVHPLSIAPLIAYGYV). Topologically, residues 364-396 (RYACQSPTCSIARRLARFGLHWVCDQWFQSARG) are extracellular. A helical membrane pass occupies residues 397-417 (IASPDFYICLIWLLVGCYRGW). Residues 418 to 836 (RLVRQRYFDT…AISYAYIAYQ (419 aa)) are Cytoplasmic-facing. Residues 455 to 486 (LNRQEKTMLTEEEDISDENDELRIRNDEVDRV) are a coiled coil. A helical transmembrane segment spans residues 837-857 (FLVIFFSMLGPAIIFTMLVFA). The Extracellular segment spans residues 858–865 (QVAAFELR). The helical transmembrane segment at 866–886 (GSDVMLYNGIPIGFFIVLCFT) threads the bilayer. Topologically, residues 887 to 892 (TESNIQ) are cytoplasmic. The chain crosses the membrane as a helical span at residues 893–913 (LIYAKYMSIAYAFVMLAVLVA). The Extracellular portion of the chain corresponds to 914–922 (TSSQIVLET). A helical transmembrane segment spans residues 923-943 (VLAPTSLFIVTMVGIFFFAAC). At 944–951 (LHPKEFTN) the chain is on the cytoplasmic side. The helical transmembrane segment at 952 to 972 (IIHGVVFFLMIPSTYVFLTLY) threads the bilayer. Topologically, residues 973–1148 (SLINLNVITW…AVAEGLASLR (176 aa)) are extracellular. Positions 1019 to 1053 (ISCREKKEHEERREKMEKKMQRMELALRSIESGAD) form a coiled coil. Residues 1149-1169 (NQIAFTILLVNSLLALAIFLI) traverse the membrane as a helical segment. The Cytoplasmic portion of the chain corresponds to 1170–1209 (QKHKNVLSIKFSPIKNFRWTKMNEMTGQYEETDEPLKIDP). A helical membrane pass occupies residues 1210 to 1230 (LGMGIVVFLLIILFVQTLGML). Residues 1231 to 1322 (LHRLNTMIGA…MQRSALSTTE (92 aa)) are Extracellular-facing.

It belongs to the chitin synthase family. Class IV subfamily.

Its subcellular location is the cell membrane. The enzyme catalyses [(1-&gt;4)-N-acetyl-beta-D-glucosaminyl](n) + UDP-N-acetyl-alpha-D-glucosamine = [(1-&gt;4)-N-acetyl-beta-D-glucosaminyl](n+1) + UDP + H(+). In terms of biological role, essential for the embryonic synthesis of chitin, a component of the eggshell. In Caenorhabditis elegans, this protein is Chitin synthase chs-1.